A 727-amino-acid polypeptide reads, in one-letter code: Glycerol-3-phosphate dehydrogenase, mitochondrial (727 aa).

Residues 1–42 (MAFQKAVKRTVLVCGGALATVLGLSQCSHYRRKQVNLACLKA) constitute a mitochondrion transit peptide. An FAD-binding site is contributed by 71-99 (DILVIGGGATGSGCALDAVTRGLKTALVE). Phosphotyrosine is present on Tyr-601. EF-hand domains follow at residues 623-658 (SDIE…INVK) and 659-694 (IDEN…IQKG). 5 residues coordinate Ca(2+): Asp-672, Asn-674, Asn-676, Gln-678, and Glu-683.

The protein belongs to the FAD-dependent glycerol-3-phosphate dehydrogenase family. FAD is required as a cofactor.

The protein localises to the mitochondrion. It carries out the reaction a quinone + sn-glycerol 3-phosphate = dihydroxyacetone phosphate + a quinol. It participates in polyol metabolism; glycerol degradation via glycerol kinase pathway; glycerone phosphate from sn-glycerol 3-phosphate (aerobic route): step 1/1. With respect to regulation, calcium-binding enhance the activity of the enzyme. Functionally, calcium-responsive mitochondrial glycerol-3-phosphate dehydrogenase which seems to be a key component of the pancreatic beta-cell glucose-sensing device. This is Glycerol-3-phosphate dehydrogenase, mitochondrial (GPD2) from Mesocricetus auratus (Golden hamster).